The primary structure comprises 360 residues: Olfactory receptor 1L1 (360 aa).

Residues 1-75 are Extracellular-facing; it reads MERNHNPDNC…GLSSRPEDQK (75 aa). An N-linked (GlcNAc...) asparagine glycan is attached at Asn-55. A helical transmembrane segment spans residues 76–99; the sequence is PLFAVFLPIYLITVIGNLLIILAI. Residues 100-107 lie on the Cytoplasmic side of the membrane; the sequence is RSDTRLQT. A helical membrane pass occupies residues 108–129; sequence PMYFFLSILSFVDICYVTVIIP. The Extracellular segment spans residues 130–150; sequence KMLVNFLSETKTISYSECLTQ. Cys-147 and Cys-239 are disulfide-bonded. Residues 151–170 form a helical membrane-spanning segment; that stretch reads MYFFLAFGNTDSYLLAAMAI. Residues 171-189 lie on the Cytoplasmic side of the membrane; sequence DRYVAICNPFHYITIMSHR. Residues 190–208 traverse the membrane as a helical segment; sequence CCVLLLVLSFCIPHFHSLL. Residues 209–246 are Extracellular-facing; the sequence is HILLTNQLIFCASNVIHHFFCDDQPVLKLSCSSHFVKE. The helical transmembrane segment at 247 to 269 threads the bilayer; it reads ITVMTEGLAVIMTPFSCIIISYL. Residues 270 to 286 lie on the Cytoplasmic side of the membrane; it reads RILITVLKIPSAAGKRK. Residues 287–309 form a helical membrane-spanning segment; sequence AFSTCGSHLTVVTLFYGSISYLY. At 310 to 321 the chain is on the extracellular side; that stretch reads FQPLSNYTVKDQ. N-linked (GlcNAc...) asparagine glycosylation is present at Asn-315. A helical transmembrane segment spans residues 322–341; it reads IATIIYTVLTPMLNPFIYSL. At 342–360 the chain is on the cytoplasmic side; it reads RNKDMKQGLAKLMHRMKCQ.

Belongs to the G-protein coupled receptor 1 family.

The protein localises to the cell membrane. Functionally, odorant receptor. The polypeptide is Olfactory receptor 1L1 (OR1L1) (Homo sapiens (Human)).